The sequence spans 255 residues: tRNA (guanine-N(1)-)-methyltransferase (255 aa).

S-adenosyl-L-methionine-binding positions include G117 and 137 to 142 (LGDFVL).

Belongs to the RNA methyltransferase TrmD family. In terms of assembly, homodimer.

The protein resides in the cytoplasm. The enzyme catalyses guanosine(37) in tRNA + S-adenosyl-L-methionine = N(1)-methylguanosine(37) in tRNA + S-adenosyl-L-homocysteine + H(+). Specifically methylates guanosine-37 in various tRNAs. This Paracidovorax citrulli (strain AAC00-1) (Acidovorax citrulli) protein is tRNA (guanine-N(1)-)-methyltransferase.